The following is a 298-amino-acid chain: Adaptation to cold protein C (298 aa).

Interacts with the C-terminal extension of AtcJ. Also interacts with AtcB, but not with AtcA.

Its activity is regulated as follows. Interaction with AtcJ stabilizes AtcC. In terms of biological role, involved in cold adaptation. This Shewanella oneidensis (strain ATCC 700550 / JCM 31522 / CIP 106686 / LMG 19005 / NCIMB 14063 / MR-1) protein is Adaptation to cold protein C.